We begin with the raw amino-acid sequence, 212 residues long: Large ribosomal subunit protein uL3 (212 aa).

A disordered region spans residues 129–156 (RRGPMGHGSKNHRAPGSTGAGTTPGRIY). Low complexity predominate over residues 142-153 (APGSTGAGTTPG).

This sequence belongs to the universal ribosomal protein uL3 family. As to quaternary structure, part of the 50S ribosomal subunit. Forms a cluster with proteins L14 and L19.

Its function is as follows. One of the primary rRNA binding proteins, it binds directly near the 3'-end of the 23S rRNA, where it nucleates assembly of the 50S subunit. This is Large ribosomal subunit protein uL3 from Acaryochloris marina (strain MBIC 11017).